A 239-amino-acid polypeptide reads, in one-letter code: MIMRPSKRAANELRPLSFTTQFTRYAEGSVLVTLGNTKVICNASIVEGVPRFLKNSEQGWLTAEYGMLPRSTHSRMDREASRGKQGGRTVEIQRLIGRSLRAALDLKLLGPYTITIDCDVIQADGGTRTAAINGSCIAMIEALRHLQRKGILQTDPLKHKVAAVSVGIYKGVPVLDLDYAEDSNAHTDMNVVMTDNDAFIEIQGTAEGDAFHAKELDALINLARHGIKQIIEKQQEALS.

Phosphate contacts are provided by residues arginine 88 and 126–128 (GTR).

Belongs to the RNase PH family. As to quaternary structure, homohexameric ring arranged as a trimer of dimers.

The catalysed reaction is tRNA(n+1) + phosphate = tRNA(n) + a ribonucleoside 5'-diphosphate. Functionally, phosphorolytic 3'-5' exoribonuclease that plays an important role in tRNA 3'-end maturation. Removes nucleotide residues following the 3'-CCA terminus of tRNAs; can also add nucleotides to the ends of RNA molecules by using nucleoside diphosphates as substrates, but this may not be physiologically important. Probably plays a role in initiation of 16S rRNA degradation (leading to ribosome degradation) during starvation. In Coxiella burnetii (strain Dugway 5J108-111), this protein is Ribonuclease PH.